A 232-amino-acid chain; its full sequence is Large ribosomal subunit protein uL1 (232 aa).

It belongs to the universal ribosomal protein uL1 family. In terms of assembly, part of the 50S ribosomal subunit.

Functionally, binds directly to 23S rRNA. The L1 stalk is quite mobile in the ribosome, and is involved in E site tRNA release. Its function is as follows. Protein L1 is also a translational repressor protein, it controls the translation of the L11 operon by binding to its mRNA. In Xanthobacter autotrophicus (strain ATCC BAA-1158 / Py2), this protein is Large ribosomal subunit protein uL1.